Here is a 383-residue protein sequence, read N- to C-terminus: Probable indole-3-pyruvate monooxygenase YUCCA10 (383 aa).

9–14 is a binding site for FAD; the sequence is GAGPAG. 177-182 lines the NADP(+) pocket; that stretch reads GGGNSG.

This sequence belongs to the FMO family. FAD serves as cofactor.

It catalyses the reaction indole-3-pyruvate + NADPH + O2 + H(+) = (indol-3-yl)acetate + CO2 + NADP(+) + H2O. It participates in plant hormone metabolism; auxin biosynthesis. Involved in auxin biosynthesis. The sequence is that of Probable indole-3-pyruvate monooxygenase YUCCA10 (YUC10) from Arabidopsis thaliana (Mouse-ear cress).